Consider the following 44-residue polypeptide: EVLLEGPSGVLFKDGQKKYLPPGVKIVLLTESGAVLSNGDNVQF.

2 tandem repeats follow at residues 3 to 20 (LLEG…KKYL) and 27 to 44 (VLLT…NVQF).

As to expression, calcified shell.

This is Cuticle protein CP466 from Cancer pagurus (Rock crab).